The sequence spans 253 residues: Chitooligosaccharide deacetylase (253 aa).

Mg(2+)-binding residues include His61 and His126.

This sequence belongs to the YdjC deacetylase family. ChbG subfamily. As to quaternary structure, homodimer. Requires Mg(2+) as cofactor.

Its subcellular location is the cytoplasm. The enzyme catalyses N,N'-diacetylchitobiose + H2O = N-acetyl-beta-D-glucosaminyl-(1-&gt;4)-D-glucosamine + acetate. It catalyses the reaction diacetylchitobiose-6'-phosphate + H2O = N'-monoacetylchitobiose-6'-phosphate + acetate. It functions in the pathway glycan degradation; chitin degradation. Its function is as follows. Involved in the degradation of chitin. ChbG is essential for growth on the acetylated chitooligosaccharides chitobiose and chitotriose but is dispensable for growth on cellobiose and chitosan dimer, the deacetylated form of chitobiose. Deacetylation of chitobiose-6-P and chitotriose-6-P is necessary for both the activation of the chb promoter by the regulatory protein ChbR and the hydrolysis of phosphorylated beta-glucosides by the phospho-beta-glucosidase ChbF. Catalyzes the removal of only one acetyl group from chitobiose-6-P to yield monoacetylchitobiose-6-P, the inducer of ChbR and the substrate of ChbF. The polypeptide is Chitooligosaccharide deacetylase (Serratia marcescens).